A 284-amino-acid chain; its full sequence is Nucleotide-binding protein SPO0713 (284 aa).

3–10 (GPSGAGRS) is a binding site for ATP. A GTP-binding site is contributed by 50–53 (DARN).

Belongs to the RapZ-like family.

Functionally, displays ATPase and GTPase activities. The polypeptide is Nucleotide-binding protein SPO0713 (Ruegeria pomeroyi (strain ATCC 700808 / DSM 15171 / DSS-3) (Silicibacter pomeroyi)).